Reading from the N-terminus, the 157-residue chain is 2-C-methyl-D-erythritol 2,4-cyclodiphosphate synthase (157 aa).

Positions 9 and 11 each coordinate a divalent metal cation. 4-CDP-2-C-methyl-D-erythritol 2-phosphate is bound by residues 9 to 11 (DVH) and 35 to 36 (HS). His-43 lines the a divalent metal cation pocket. Residues 57–59 (DIG), 62–66 (FPDTD), 101–107 (AEKPKMA), 133–136 (TTTE), Phe-140, and Arg-143 contribute to the 4-CDP-2-C-methyl-D-erythritol 2-phosphate site.

The protein belongs to the IspF family. In terms of assembly, homotrimer. Requires a divalent metal cation as cofactor.

It catalyses the reaction 4-CDP-2-C-methyl-D-erythritol 2-phosphate = 2-C-methyl-D-erythritol 2,4-cyclic diphosphate + CMP. Its pathway is isoprenoid biosynthesis; isopentenyl diphosphate biosynthesis via DXP pathway; isopentenyl diphosphate from 1-deoxy-D-xylulose 5-phosphate: step 4/6. Involved in the biosynthesis of isopentenyl diphosphate (IPP) and dimethylallyl diphosphate (DMAPP), two major building blocks of isoprenoid compounds. Catalyzes the conversion of 4-diphosphocytidyl-2-C-methyl-D-erythritol 2-phosphate (CDP-ME2P) to 2-C-methyl-D-erythritol 2,4-cyclodiphosphate (ME-CPP) with a corresponding release of cytidine 5-monophosphate (CMP). In Listeria monocytogenes serotype 4b (strain F2365), this protein is 2-C-methyl-D-erythritol 2,4-cyclodiphosphate synthase.